Here is a 244-residue protein sequence, read N- to C-terminus: Phosphoadenosine 5'-phosphosulfate reductase (244 aa).

Residue Cys239 is the Nucleophile; cysteine thiosulfonate intermediate of the active site.

Belongs to the PAPS reductase family. CysH subfamily.

Its subcellular location is the cytoplasm. The enzyme catalyses [thioredoxin]-disulfide + sulfite + adenosine 3',5'-bisphosphate + 2 H(+) = [thioredoxin]-dithiol + 3'-phosphoadenylyl sulfate. It functions in the pathway sulfur metabolism; hydrogen sulfide biosynthesis; sulfite from sulfate: step 3/3. Functionally, catalyzes the formation of sulfite from phosphoadenosine 5'-phosphosulfate (PAPS) using thioredoxin as an electron donor. This is Phosphoadenosine 5'-phosphosulfate reductase from Salmonella arizonae (strain ATCC BAA-731 / CDC346-86 / RSK2980).